A 336-amino-acid polypeptide reads, in one-letter code: Transmembrane protein 19 (336 aa).

Helical transmembrane passes span 15–35, 49–69, 84–104, 218–238, 257–277, and 313–333; these read MITN…FWII, ISPW…SNGL, VVGF…LMFF, VTVV…IAYF, IIAF…YLGA, and VNLF…WGFW.

The protein belongs to the TMEM19 family.

The protein localises to the membrane. In Homo sapiens (Human), this protein is Transmembrane protein 19 (TMEM19).